The sequence spans 216 residues: Transmembrane emp24 domain-containing protein eca (216 aa).

The N-terminal stretch at M1–G20 is a signal peptide. Residues L21–S182 lie on the Lumenal side of the membrane. One can recognise a GOLD domain in the interval R30 to V126. A coiled-coil region spans residues A134–N164. Residues R183–M203 traverse the membrane as a helical segment. Residues R204–V216 are Cytoplasmic-facing. The Prevents secretion from ER signature appears at K213–V216.

The protein belongs to the EMP24/GP25L family.

Its subcellular location is the endoplasmic reticulum membrane. In terms of biological role, eca and bai are essential, though not redundant, for dorsoventral patterning of the embryo. Specifically required during early embryogenesis for the activity of maternal tkv, while the zygotic tkv is not affected. Involved in Golgi organization. In Drosophila erecta (Fruit fly), this protein is Transmembrane emp24 domain-containing protein eca.